The sequence spans 354 residues: Phosphoribosylformylglycinamidine cyclo-ligase (354 aa).

The protein belongs to the AIR synthase family.

It localises to the cytoplasm. The catalysed reaction is 2-formamido-N(1)-(5-O-phospho-beta-D-ribosyl)acetamidine + ATP = 5-amino-1-(5-phospho-beta-D-ribosyl)imidazole + ADP + phosphate + H(+). The protein operates within purine metabolism; IMP biosynthesis via de novo pathway; 5-amino-1-(5-phospho-D-ribosyl)imidazole from N(2)-formyl-N(1)-(5-phospho-D-ribosyl)glycinamide: step 2/2. The polypeptide is Phosphoribosylformylglycinamidine cyclo-ligase (Marinobacter nauticus (strain ATCC 700491 / DSM 11845 / VT8) (Marinobacter aquaeolei)).